A 307-amino-acid chain; its full sequence is Ubiquinol oxidase subunit 2 (307 aa).

The first 23 residues, M1 to G23, serve as a signal peptide directing secretion. C24 carries the N-palmitoyl cysteine lipid modification. Residue C24 is the site of S-diacylglycerol cysteine attachment. 2 consecutive transmembrane segments (helical) span residues S46–W66 and I87–Y107.

The protein belongs to the cytochrome c oxidase subunit 2 family. Heterotetramer of the subunits 1, 2, 3 and 4.

It is found in the cell membrane. This chain is Ubiquinol oxidase subunit 2 (cyaB), found in Acetobacter aceti.